Here is an 82-residue protein sequence, read N- to C-terminus: Small ribosomal subunit protein bS18 (82 aa).

The segment at 1–21 (MKRNNSKKVRVEPTRRPKKNP) is disordered.

This sequence belongs to the bacterial ribosomal protein bS18 family. As to quaternary structure, part of the 30S ribosomal subunit. Forms a tight heterodimer with protein bS6.

Its function is as follows. Binds as a heterodimer with protein bS6 to the central domain of the 16S rRNA, where it helps stabilize the platform of the 30S subunit. The protein is Small ribosomal subunit protein bS18 of Corynebacterium kroppenstedtii (strain DSM 44385 / JCM 11950 / CIP 105744 / CCUG 35717).